Here is a 307-residue protein sequence, read N- to C-terminus: S-methyl-5'-thioadenosine phosphorylase (307 aa).

Phosphate contacts are provided by residues T20, 62-63 (RH), and 95-96 (SA). M197 is a substrate binding site. S198 provides a ligand contact to phosphate. Residue 221 to 223 (DYD) coordinates substrate.

The protein belongs to the PNP/MTAP phosphorylase family. MTAP subfamily. Homotrimer.

The protein localises to the cytoplasm. Its subcellular location is the nucleus. It catalyses the reaction S-methyl-5'-thioadenosine + phosphate = 5-(methylsulfanyl)-alpha-D-ribose 1-phosphate + adenine. It functions in the pathway amino-acid biosynthesis; L-methionine biosynthesis via salvage pathway; S-methyl-5-thio-alpha-D-ribose 1-phosphate from S-methyl-5'-thioadenosine (phosphorylase route): step 1/1. Its function is as follows. Catalyzes the reversible phosphorylation of S-methyl-5'-thioadenosine (MTA) to adenine and 5-methylthioribose-1-phosphate. Involved in the breakdown of MTA, a major by-product of polyamine biosynthesis. Responsible for the first step in the methionine salvage pathway after MTA has been generated from S-adenosylmethionine. Has broad substrate specificity with 6-aminopurine nucleosides as preferred substrates. The protein is S-methyl-5'-thioadenosine phosphorylase of Fusarium vanettenii (strain ATCC MYA-4622 / CBS 123669 / FGSC 9596 / NRRL 45880 / 77-13-4) (Fusarium solani subsp. pisi).